We begin with the raw amino-acid sequence, 210 residues long: Probable transcriptional regulator ycf29 (210 aa).

In terms of domain architecture, Response regulatory spans 3–119; that stretch reads NILILDTDIG…ELVVIIEGVL (117 aa). Asp52 carries the post-translational modification 4-aspartylphosphate. Residues 142–207 enclose the HTH luxR-type domain; the sequence is SNNLKINFTP…ELVKYALENN (66 aa).

Its subcellular location is the plastid. The protein resides in the cyanelle. In Cyanophora paradoxa, this protein is Probable transcriptional regulator ycf29 (ycf29).